Here is a 467-residue protein sequence, read N- to C-terminus: ATP synthase subunit beta (467 aa).

152–159 is a binding site for ATP; the sequence is GGAGVGKT.

Belongs to the ATPase alpha/beta chains family. In terms of assembly, F-type ATPases have 2 components, CF(1) - the catalytic core - and CF(0) - the membrane proton channel. CF(1) has five subunits: alpha(3), beta(3), gamma(1), delta(1), epsilon(1). CF(0) has three main subunits: a(1), b(2) and c(9-12). The alpha and beta chains form an alternating ring which encloses part of the gamma chain. CF(1) is attached to CF(0) by a central stalk formed by the gamma and epsilon chains, while a peripheral stalk is formed by the delta and b chains.

Its subcellular location is the cell inner membrane. The enzyme catalyses ATP + H2O + 4 H(+)(in) = ADP + phosphate + 5 H(+)(out). Produces ATP from ADP in the presence of a proton gradient across the membrane. The catalytic sites are hosted primarily by the beta subunits. This is ATP synthase subunit beta from Wolinella succinogenes (strain ATCC 29543 / DSM 1740 / CCUG 13145 / JCM 31913 / LMG 7466 / NCTC 11488 / FDC 602W) (Vibrio succinogenes).